The chain runs to 121 residues: Probable intron-encoded DNA endonuclease aI1 (121 aa).

This sequence belongs to the LAGLIDADG endonuclease family.

It is found in the mitochondrion. Its function is as follows. Mitochondrial DNA endonuclease involved in intron homing. The chain is Probable intron-encoded DNA endonuclease aI1 (aI1) from Mycosarcoma maydis (Corn smut fungus).